Here is a 426-residue protein sequence, read N- to C-terminus: Synaptotagmin-13 (426 aa).

The Vesicular portion of the chain corresponds to 1-6 (MVLSVP). The helical transmembrane segment at 7-29 (VIALGATLGTATSILALCGVTCL) threads the bilayer. Residues 30 to 426 (CRHMHPKKGL…QIAMWHQLHL (397 aa)) lie on the Cytoplasmic side of the membrane. 2 C2 domains span residues 158–275 (QAPK…AQWG) and 287–422 (GAGE…AMWH).

This sequence belongs to the synaptotagmin family. As to quaternary structure, interacts with NRXN1. Expressed in brain, heart, spleen, lung and testis.

Its subcellular location is the cytoplasmic vesicle membrane. Its function is as follows. May be involved in transport vesicle docking to the plasma membrane. The sequence is that of Synaptotagmin-13 (Syt13) from Mus musculus (Mouse).